Reading from the N-terminus, the 496-residue chain is Glycerol kinase (496 aa).

Residue threonine 12 participates in ADP binding. 3 residues coordinate ATP: threonine 12, threonine 13, and serine 14. Sn-glycerol 3-phosphate is bound at residue threonine 12. Arginine 16 lines the ADP pocket. 4 residues coordinate sn-glycerol 3-phosphate: arginine 82, glutamate 83, tyrosine 134, and aspartate 244. Residues arginine 82, glutamate 83, tyrosine 134, aspartate 244, and glutamine 245 each coordinate glycerol. 2 residues coordinate ADP: threonine 266 and glycine 309. ATP contacts are provided by threonine 266, glycine 309, glutamine 313, and glycine 410. The ADP site is built by glycine 410 and asparagine 414.

It belongs to the FGGY kinase family.

The catalysed reaction is glycerol + ATP = sn-glycerol 3-phosphate + ADP + H(+). Its pathway is polyol metabolism; glycerol degradation via glycerol kinase pathway; sn-glycerol 3-phosphate from glycerol: step 1/1. With respect to regulation, inhibited by fructose 1,6-bisphosphate (FBP). Key enzyme in the regulation of glycerol uptake and metabolism. Catalyzes the phosphorylation of glycerol to yield sn-glycerol 3-phosphate. In Treponema denticola (strain ATCC 35405 / DSM 14222 / CIP 103919 / JCM 8153 / KCTC 15104), this protein is Glycerol kinase.